The sequence spans 335 residues: Deoxyhypusine hydroxylase (335 aa).

HEAT-like PBS-type repeat units lie at residues 71-97 (LKHE…VAKD), 104-130 (CRHE…LRDN), 200-233 (LRYR…GLKD), 238-264 (FRHE…ALSN), and 271-298 (VRHE…FLND). The Fe cation site is built by histidine 73, glutamate 74, histidine 106, and glutamate 107. Positions 240, 241, 273, and 274 each coordinate Fe cation.

The protein belongs to the deoxyhypusine hydroxylase family. The cofactor is Fe(2+).

It is found in the cytoplasm. The protein resides in the nucleus. It catalyses the reaction [eIF5A protein]-deoxyhypusine + AH2 + O2 = [eIF5A protein]-hypusine + A + H2O. It participates in protein modification; eIF5A hypusination. In terms of biological role, catalyzes the hydroxylation of the N(6)-(4-aminobutyl)-L-lysine intermediate to form hypusine, an essential post-translational modification only found in mature eIF-5A factor. The sequence is that of Deoxyhypusine hydroxylase (lia1) from Aspergillus fumigatus (strain ATCC MYA-4609 / CBS 101355 / FGSC A1100 / Af293) (Neosartorya fumigata).